Reading from the N-terminus, the 518-residue chain is D-aminopeptidase (518 aa).

S62 serves as the catalytic Nucleophile. K65 acts as the Proton donor/acceptor in catalysis. Residues 373–392 form a disordered region; sequence FGTGPEKMDISGENEAQSSM. Positions 477–487 are important for specificity; it reads QRSMDAPSPGE. Position 481 (D481) interacts with substrate.

Belongs to the peptidase S12 family. In terms of assembly, homodimer.

It carries out the reaction Release of an N-terminal D-amino acid from a peptide, Xaa-|-Yaa-, in which Xaa is preferably D-Ala, D-Ser or D-Thr. D-amino acid amides and methyl esters also are hydrolyzed, as is glycine amide.. Inhibited by beta-lactam compounds such as 6-aminopenicillic acid, 7-aminocephalosporanic acid, benzylpenicillin and ampicillin. Inhibited by p-chloromercuribenzoate. Functionally, hydrolyzes N-terminal residues in D-amino acid-containing peptides. This Brucella melitensis biotype 2 (strain ATCC 23457) protein is D-aminopeptidase.